The primary structure comprises 152 residues: Small ribosomal subunit protein uS15 (152 aa).

Basic residues predominate over residues M1 to R19. Positions M1 to T21 are disordered.

Belongs to the universal ribosomal protein uS15 family. Part of the 30S ribosomal subunit.

The chain is Small ribosomal subunit protein uS15 from Methanocella arvoryzae (strain DSM 22066 / NBRC 105507 / MRE50).